Here is a 1710-residue protein sequence, read N- to C-terminus: Ankyrin repeat domain-containing protein 26 (1710 aa).

The tract at residues 1-41 (MKKIFSKKGESPLGSFARRQRSSAGGGGEPGEGAYSQPGYH) is disordered. A phosphoserine mark is found at Ser-11 and Ser-15. ANK repeat units follow at residues 45 to 75 (RDLG…GLND), 79 to 108 (MNRT…QLNV), 112 to 141 (ENRT…DPNL), 145 to 174 (HGNT…NIEA), and 178 to 207 (DDLT…NVNA). The interval 222–274 (KEERIPKHSSQNSNSVDESSEDSLSRLSGKPGVDDSWPTSDDEDLNFDTKNVP) is disordered. Phosphoserine is present on residues Ser-241, Ser-261, Ser-489, and Ser-530. The tract at residues 504-630 (DSVPNKAGGM…EKRTSKESVN (127 aa)) is disordered. Residues 529 to 566 (ASEEEQEREGSENNQPQVEEERKKHRNNEMEVSANIHD) adopt a coiled-coil conformation. A compositionally biased stretch (acidic residues) spans 569–580 (TDDAEDDDDDDG). Composition is skewed to basic and acidic residues over residues 586-602 (KSGE…ENKE) and 613-626 (KEVK…RTSK). Ser-631 carries the phosphoserine modification. Positions 650 to 660 (DSSLSEIDEDE) are enriched in acidic residues. The disordered stretch occupies residues 650–698 (DSSLSEIDEDEGRPTKKTSNEKNKVKNQIQSMDDVDDLTQSSETASEDC). A compositionally biased stretch (basic and acidic residues) spans 661-673 (GRPTKKTSNEKNK). Coiled coils occupy residues 743–873 (KNHC…NARM), 905–1472 (EEEK…MVEL), 1517–1587 (NNFA…NTKL), and 1649–1674 (LSKM…LESG). Residues 892–912 (AQKKMNSENSHSHEEEKDLSH) are disordered.

In terms of assembly, interacts with TRIO. Interacts with GPS2. Interacts with CCDC85B. Interacts with HMMR.

Functionally, acts as a regulator of adipogenesis. Involved in the regulation of the feeding behavior. This Homo sapiens (Human) protein is Ankyrin repeat domain-containing protein 26.